A 268-amino-acid chain; its full sequence is MAEQRIDTQYEDLLRHVLATGTPKSDRTGTGTRSVFGHQLRYDLSAGFPLVTTKRVHFKSIALELLWFLRGDGNVRWLQERGVTIWDEWADENGDLGPVYGVQWRSWPTPDGRHVDQIAQVLHTLRTDPDSRRMVVSAWNVAELDRMALAPCHAFFQFHVADGKLSCQLYQRSADLFLGVPFNIASYALLTHLVAAEVGLEVGDFVWTGGDVHVYDNHVEQVTEQLTRTPYPFPRLAVRPAGLFEHEYEDFEVLDYRHHPAIKAPVAV.

Arg-27 provides a ligand contact to dUMP. His-57 contacts (6R)-5,10-methylene-5,6,7,8-tetrahydrofolate. DUMP is bound at residue Arg-132–Arg-133. Cys-152 (nucleophile) is an active-site residue. Residues Arg-172–Asp-175, Asn-183, and His-213–Tyr-215 each bind dUMP. Asp-175 contacts (6R)-5,10-methylene-5,6,7,8-tetrahydrofolate. Residue Ala-267 participates in (6R)-5,10-methylene-5,6,7,8-tetrahydrofolate binding.

This sequence belongs to the thymidylate synthase family. Bacterial-type ThyA subfamily. As to quaternary structure, homodimer.

It is found in the cytoplasm. The catalysed reaction is dUMP + (6R)-5,10-methylene-5,6,7,8-tetrahydrofolate = 7,8-dihydrofolate + dTMP. It participates in pyrimidine metabolism; dTTP biosynthesis. Functionally, catalyzes the reductive methylation of 2'-deoxyuridine-5'-monophosphate (dUMP) to 2'-deoxythymidine-5'-monophosphate (dTMP) while utilizing 5,10-methylenetetrahydrofolate (mTHF) as the methyl donor and reductant in the reaction, yielding dihydrofolate (DHF) as a by-product. This enzymatic reaction provides an intracellular de novo source of dTMP, an essential precursor for DNA biosynthesis. This chain is Thymidylate synthase, found in Kineococcus radiotolerans (strain ATCC BAA-149 / DSM 14245 / SRS30216).